Reading from the N-terminus, the 439-residue chain is Trigger factor (439 aa).

The PPIase FKBP-type domain occupies 175–260; the sequence is GDRVTISYRS…VERLSVKDEI (86 aa).

The protein belongs to the FKBP-type PPIase family. Tig subfamily.

It localises to the cytoplasm. It carries out the reaction [protein]-peptidylproline (omega=180) = [protein]-peptidylproline (omega=0). In terms of biological role, involved in protein export. Acts as a chaperone by maintaining the newly synthesized protein in an open conformation. Functions as a peptidyl-prolyl cis-trans isomerase. This chain is Trigger factor, found in Anaplasma phagocytophilum (strain HZ).